The following is a 70-amino-acid chain: Conotoxin AbVIB (70 aa).

The first 17 residues, 1–17, serve as a signal peptide directing secretion; that stretch reads VIIIAVLFLTACQLTTA. Positions 18 to 41 are excised as a propeptide; the sequence is ETSSRGKQKHRALRSTDKNSKLTR. Residues 20–41 form a disordered region; it reads SSRGKQKHRALRSTDKNSKLTR. 3 disulfides stabilise this stretch: C43/C57, C50/C61, and C56/C68.

This sequence belongs to the conotoxin O1 superfamily. Expressed by the venom duct.

The protein localises to the secreted. The chain is Conotoxin AbVIB from Conus abbreviatus (Abbreviated cone).